A 494-amino-acid polypeptide reads, in one-letter code: Alpha-amylase-related protein (494 aa).

Positions 1-20 (MFKFAAAVILCLVAASSTLA) are cleaved as a signal peptide. Q21 is modified (pyrrolidone carboxylic acid). C48 and C104 form a disulfide bridge. Ca(2+)-binding residues include N118, Q169, and D178. C157 and C171 are oxidised to a cystine. Residue R206 participates in chloride binding. Catalysis depends on D208, which acts as the Nucleophile. H212 is a Ca(2+) binding site. The active-site Proton donor is the E245. N308 and R343 together coordinate chloride. 3 cysteine pairs are disulfide-bonded: C376–C382, C418–C441, and C448–C460.

Belongs to the glycosyl hydrolase 13 family. Monomer. The cofactor is Ca(2+). Chloride serves as cofactor.

The protein localises to the secreted. It carries out the reaction Endohydrolysis of (1-&gt;4)-alpha-D-glucosidic linkages in polysaccharides containing three or more (1-&gt;4)-alpha-linked D-glucose units.. The protein is Alpha-amylase-related protein (Amyrel) of Drosophila atripex (Fruit fly).